Consider the following 359-residue polypeptide: Type-1 angiotensin II receptor A (359 aa).

At 1–25 (MALNSSTEDGIKRIQDDCPRAGRHS) the chain is on the extracellular side. Residue asparagine 4 is glycosylated (N-linked (GlcNAc...) asparagine). The angiotensin II site is built by glutamine 15 and aspartate 17. 2 disulfides stabilise this stretch: cysteine 18/cysteine 274 and cysteine 101/cysteine 180. The helical transmembrane segment at 26–55 (YIFVMIPTLYSIIFVVGIFGNSLVVIVIYF) threads the bilayer. At 56–61 (YMKLKT) the chain is on the cytoplasmic side. Residues 62 to 89 (VASVFLLNLALADLCFLLTLPLWAVYTA) form a helical membrane-spanning segment. Residues 90-98 (MEYRWPFGN) lie on the Extracellular side of the membrane. The chain crosses the membrane as a helical span at residues 99–125 (HLCKIASASVSFNLYASVFLLTCLSID). The Cytoplasmic portion of the chain corresponds to 126 to 141 (RYLAIVHPMKSRLRRT). The chain crosses the membrane as a helical span at residues 142–165 (MLVAKVTCIIIWLMAGLASLPAVI). Topologically, residues 166 to 190 (HRNVYFIENTNITVCAFHYESRNST) are extracellular. Arginine 167 contacts angiotensin II. An N-linked (GlcNAc...) asparagine glycan is attached at asparagine 176. Angiotensin II-binding residues include phenylalanine 182, histidine 183, and tyrosine 184. Residue asparagine 188 is glycosylated (N-linked (GlcNAc...) asparagine). A helical membrane pass occupies residues 191 to 216 (LPIGLGLTKNILGFLFPFLIILTSYT). An angiotensin II-binding site is contributed by lysine 199. Over 217–239 (LIWKALKKAYEIQKNKPRNDDIF) the chain is Cytoplasmic. Residues 240–268 (RIIMAIVLFFFFSWVPHQIFTFLDVLIQL) traverse the membrane as a helical segment. Residues 269–278 (GVIHDCKIAD) lie on the Extracellular side of the membrane. The chain crosses the membrane as a helical span at residues 279–304 (IVDTAMPITICIAYFNNCLNPLFYGF). The Cytoplasmic portion of the chain corresponds to 305–359 (LGKKFKKYFLQLLKYIPPKAKSHSSLSTKMSTLSYRPSDNMSSAAKKPASCSEVE). Positions 335–347 (STLSYRPSDNMSS) are enriched in polar residues. The segment at 335–359 (STLSYRPSDNMSSAAKKPASCSEVE) is disordered. A lipid anchor (S-palmitoyl cysteine) is attached at cysteine 355.

This sequence belongs to the G-protein coupled receptor 1 family. Interacts with MAS1. Interacts with ARRB1. Interacts with FLNA (via filamin repeat 21); increases PKA-mediated phosphorylation of FLNA. C-terminal Ser or Thr residues may be phosphorylated.

Its subcellular location is the cell membrane. In terms of biological role, receptor for angiotensin II, a vasoconstricting peptide, which acts as a key regulator of blood pressure and sodium retention by the kidney. The activated receptor in turn couples to G-alpha proteins G(q) (GNAQ, GNA11, GNA14 or GNA15) and thus activates phospholipase C and increases the cytosolic Ca(2+) concentrations, which in turn triggers cellular responses such as stimulation of protein kinase C. The protein is Type-1 angiotensin II receptor A (Agtr1a) of Mus musculus (Mouse).